Reading from the N-terminus, the 248-residue chain is Triosephosphate isomerase (248 aa).

Substrate contacts are provided by N10 and K12. Catalysis depends on H95, which acts as the Electrophile. The Proton acceptor role is filled by E165.

Belongs to the triosephosphate isomerase family. Homodimer.

The catalysed reaction is D-glyceraldehyde 3-phosphate = dihydroxyacetone phosphate. Its pathway is carbohydrate biosynthesis; gluconeogenesis. The protein operates within carbohydrate degradation; glycolysis; D-glyceraldehyde 3-phosphate from glycerone phosphate: step 1/1. This Debaryomyces hansenii (strain ATCC 36239 / CBS 767 / BCRC 21394 / JCM 1990 / NBRC 0083 / IGC 2968) (Yeast) protein is Triosephosphate isomerase (TPI1).